The sequence spans 260 residues: uncharacterized protein (260 aa).

Residues 8–166 (LALGSGGARG…VDRIPVSVVK (159 aa)) form the PNPLA domain. The GXSXG motif lies at 39–43 (GSSMG). Residue serine 41 is the Nucleophile of the active site. The active-site Proton acceptor is aspartate 153. The DGA/G signature appears at 153–155 (DGA).

This sequence belongs to the NTE family.

This is an uncharacterized protein from Bacillus subtilis (strain 168).